The chain runs to 333 residues: Phosphate acyltransferase (333 aa).

It belongs to the PlsX family. In terms of assembly, homodimer. Probably interacts with PlsY.

It is found in the cytoplasm. The catalysed reaction is a fatty acyl-[ACP] + phosphate = an acyl phosphate + holo-[ACP]. It functions in the pathway lipid metabolism; phospholipid metabolism. Catalyzes the reversible formation of acyl-phosphate (acyl-PO(4)) from acyl-[acyl-carrier-protein] (acyl-ACP). This enzyme utilizes acyl-ACP as fatty acyl donor, but not acyl-CoA. This chain is Phosphate acyltransferase, found in Enterococcus faecalis (strain ATCC 700802 / V583).